We begin with the raw amino-acid sequence, 283 residues long: Bifunctional protein FolD (283 aa).

NADP(+)-binding positions include 165-167 (GAS) and Ser190.

It belongs to the tetrahydrofolate dehydrogenase/cyclohydrolase family. Homodimer.

The enzyme catalyses (6R)-5,10-methylene-5,6,7,8-tetrahydrofolate + NADP(+) = (6R)-5,10-methenyltetrahydrofolate + NADPH. It carries out the reaction (6R)-5,10-methenyltetrahydrofolate + H2O = (6R)-10-formyltetrahydrofolate + H(+). Its pathway is one-carbon metabolism; tetrahydrofolate interconversion. Its function is as follows. Catalyzes the oxidation of 5,10-methylenetetrahydrofolate to 5,10-methenyltetrahydrofolate and then the hydrolysis of 5,10-methenyltetrahydrofolate to 10-formyltetrahydrofolate. This Cupriavidus taiwanensis (strain DSM 17343 / BCRC 17206 / CCUG 44338 / CIP 107171 / LMG 19424 / R1) (Ralstonia taiwanensis (strain LMG 19424)) protein is Bifunctional protein FolD.